A 336-amino-acid chain; its full sequence is Flap endonuclease 1 (336 aa).

The tract at residues 1 to 98 is N-domain; the sequence is MGVDLGDILS…GTLAARAQMK (98 aa). Mg(2+) contacts are provided by Asp-27, Asp-80, Glu-150, Glu-152, Asp-171, Asp-173, and Asp-234. The tract at residues 114-255 is I-domain; sequence DSFRYAQATA…RALKLIREHG (142 aa). Residues 328–336 form an interaction with PCNA region; it reads GQSTLERWL.

It belongs to the XPG/RAD2 endonuclease family. FEN1 subfamily. Interacts with PCNA. PCNA stimulates the nuclease activity without altering cleavage specificity. The cofactor is Mg(2+).

Its function is as follows. Structure-specific nuclease with 5'-flap endonuclease and 5'-3' exonuclease activities involved in DNA replication and repair. During DNA replication, cleaves the 5'-overhanging flap structure that is generated by displacement synthesis when DNA polymerase encounters the 5'-end of a downstream Okazaki fragment. Binds the unpaired 3'-DNA end and kinks the DNA to facilitate 5' cleavage specificity. Cleaves one nucleotide into the double-stranded DNA from the junction in flap DNA, leaving a nick for ligation. Also involved in the base excision repair (BER) pathway. Acts as a genome stabilization factor that prevents flaps from equilibrating into structures that lead to duplications and deletions. Also possesses 5'-3' exonuclease activity on nicked or gapped double-stranded DNA. This chain is Flap endonuclease 1, found in Methanothrix thermoacetophila (strain DSM 6194 / JCM 14653 / NBRC 101360 / PT) (Methanosaeta thermophila).